The primary structure comprises 486 residues: Protein nucleotidyltransferase YdiU (486 aa).

8 residues coordinate ATP: glycine 90, glycine 92, arginine 93, lysine 113, aspartate 125, glycine 126, arginine 176, and arginine 183. Aspartate 252 (proton acceptor) is an active-site residue. Mg(2+)-binding residues include asparagine 253 and aspartate 262. Aspartate 262 contacts ATP.

The protein belongs to the SELO family. Mg(2+) serves as cofactor. Requires Mn(2+) as cofactor.

It carries out the reaction L-seryl-[protein] + ATP = 3-O-(5'-adenylyl)-L-seryl-[protein] + diphosphate. The enzyme catalyses L-threonyl-[protein] + ATP = 3-O-(5'-adenylyl)-L-threonyl-[protein] + diphosphate. It catalyses the reaction L-tyrosyl-[protein] + ATP = O-(5'-adenylyl)-L-tyrosyl-[protein] + diphosphate. The catalysed reaction is L-histidyl-[protein] + UTP = N(tele)-(5'-uridylyl)-L-histidyl-[protein] + diphosphate. It carries out the reaction L-seryl-[protein] + UTP = O-(5'-uridylyl)-L-seryl-[protein] + diphosphate. The enzyme catalyses L-tyrosyl-[protein] + UTP = O-(5'-uridylyl)-L-tyrosyl-[protein] + diphosphate. Functionally, nucleotidyltransferase involved in the post-translational modification of proteins. It can catalyze the addition of adenosine monophosphate (AMP) or uridine monophosphate (UMP) to a protein, resulting in modifications known as AMPylation and UMPylation. The chain is Protein nucleotidyltransferase YdiU from Pseudomonas putida (strain ATCC 47054 / DSM 6125 / CFBP 8728 / NCIMB 11950 / KT2440).